The chain runs to 1398 residues: MAKNKTIEERYQKKSQIEHILLRPDTYIGSVEMHTQLLWVWNKEKNRMVQKNITYVPGLYKIFDEIIVNAADVKAREKEKSENPMTCIKIEINKENKRISVYNDGEGIPVDIHKEMNIYVPHMIFGELLTSDNYDDAEDRITGGRNGFGAKLTNIFSKEFIVQCGDSSRKKEFKMTWSDNMSKFSEPHIKNYNGKDYVKVTFKPDLNKFGMTEMDDDIESLLFKRVYDLAGTCSVRVYLNGQRLAVKDFKSYVDLYLKDNSNDNKNNKGQNDNNNNNNNNNDENANQNNDNLDVSLSNEPADGTPTKNNNNNNNNNDEDEIVKIHEKQHRWEIVVSKSDGSQFQQVSFVNSICTTKGGSHVNYIVEQLLSSLSKKANAKNKGGMEIKSGHIRNHLWVFVNCLIVNPTFDSQTKETLTTKPVKFGSKCILSDKTINNVLKSPILSNILLWAQAKAQVELKKKMKAGSSKARERIIGIPKLEDANDAGSKYSQECTLILTEGDSAKTSCLAGLSIVGRDKYGVFPLKGKLLNVRDASFKQLMDNKEIQNIFRIMGLDITDKNKDDIKGLRYGSLMIMTDQDYDGSHIKGLLINMIHKFWPSLLKHKGFLSEFVTPIVKVQKGSQEYSFFTIAEYEQWKENTNLLGWKIKYYKGLGTSTDREFKQYFSDIKNHKIMFLWTGDRDGDSIDMAFSKKRIEDRKLWLQNFILGSYVDHKEKDLSYYDFVNKELIYYSRYDTERSIPNIMDGWKPGQRKVLYGCFKRNLRNECKVAQLVGYIAEHSAYHHHGESSLQQTIINMAQTFVGSNNINFLEPCGQFGSRKEGGKDASAARYIFTKLASSTRSIFNEYDDPILKYLNEEGQKIEPQYYIPVIPTILVNGCEGIGTGYSSFIPNYNYKDIIDNIKRYINKEPLIPMVPWYKDFKGRIESNGKTGYETIGIINKIDNDTLEITELPIKKWTQDYKEFLEELLTDEKHQLILDYIDNSSHEDICFTIKMDPAKLQKAEEEGLEKVFKLKSTLTTTNMTLFDPNLKLQRYSTELDILKEFCYQRLKAYENRKSYLISKLEKEKRIISNKTKFILAIVNNELIVNKKKKKVLVEELYRKGYDPYKDINKIKKEEIFEQELLDAADNPEDNEEIIAGITVKDYDYLLSMPIFSLTLEKVEDLLTQLKEKERELEILRNITVETMWLKDIEKVEEAIEFQRNVELSNREESNKFKVARKQGPSSMKKKKKKKKLSSDEESEGGDTSDSSEFLVNTLNIKKNTNKKTTTSSNNVNNSKKRLRKADDLNSNELDNTLSVSKTFDDNNNLTDNTPLINRLNDENNEFSSNNVDNKSTNKNSRKKKPKIADSTNDNNSELNSSIQINDNVNDDINITISPNKTINVNEFSSIKNKLLELGI.

ATP-binding positions include Asn69, Asn103, 131 to 133 (SDN), and 144 to 151 (GRNGFGAK). The tract at residues 260–317 (NSNDNKNNKGQNDNNNNNNNNNDENANQNNDNLDVSLSNEPADGTPTKNNNNNNNNND) is disordered. Over residues 267–291 (NKGQNDNNNNNNNNNDENANQNNDN) the composition is skewed to low complexity. Residue 411–413 (QTK) coordinates ATP. The Toprim domain occupies 493 to 608 (CTLILTEGDS…SLLKHKGFLS (116 aa)). Residues Glu499, Asp577, and Asp579 each contribute to the Mg(2+) site. The Topo IIA-type catalytic domain occupies 739–1191 (IPNIMDGWKP…TVETMWLKDI (453 aa)). The active-site O-(5'-phospho-DNA)-tyrosine intermediate is Tyr830. The tract at residues 1012-1021 (KLKSTLTTTN) is interaction with DNA. Disordered regions lie at residues 1214-1250 (KFKV…SDSS) and 1262-1361 (NTNK…NSSI). Residues 1262–1276 (NTNKKTTTSSNNVNN) are compositionally biased toward low complexity. Composition is skewed to polar residues over residues 1287–1300 (LNSN…SVSK) and 1348–1357 (DSTNDNNSEL).

This sequence belongs to the type II topoisomerase family. Homodimer. It depends on Mg(2+) as a cofactor. Requires Mn(2+) as cofactor. Ca(2+) serves as cofactor.

The protein resides in the nucleus. The catalysed reaction is ATP-dependent breakage, passage and rejoining of double-stranded DNA.. Control of topological states of DNA by transient breakage and subsequent rejoining of DNA strands. Topoisomerase II makes double-strand breaks. The polypeptide is DNA topoisomerase 2 (TOP2) (Plasmodium falciparum (isolate K1 / Thailand)).